A 333-amino-acid polypeptide reads, in one-letter code: Phosphate acetyltransferase (333 aa).

Belongs to the phosphate acetyltransferase and butyryltransferase family.

It is found in the cytoplasm. The enzyme catalyses acetyl-CoA + phosphate = acetyl phosphate + CoA. Its pathway is metabolic intermediate biosynthesis; acetyl-CoA biosynthesis; acetyl-CoA from acetate: step 2/2. The polypeptide is Phosphate acetyltransferase (pta) (Clostridium acetobutylicum (strain ATCC 824 / DSM 792 / JCM 1419 / IAM 19013 / LMG 5710 / NBRC 13948 / NRRL B-527 / VKM B-1787 / 2291 / W)).